Reading from the N-terminus, the 332-residue chain is MQKNILVLGAGAWGTALALQLAYRGHNVRINSWKAEHNEQMLKDNNNHKYLPSIEKFPSRLKAIQDWQANIIEFDSILVATPSSGFKNTILELKECILPQQNIISATKGFCHDSYALLSEIAEDILPTTKFALLTGPSFAKELANQLPTAVVVASKDINYARYVQELFSNENFRCYTTTDIIGAQVGGAVKNVLAITAGIAAGMEFGVNAHAALITRGLAEIKKLGLKLGANSETFIGLSCLGDLLLTCSDNQSRNRRFGLYLGQGMTIQQALKEVNNVVEGYFTAKAVYNLAKKHNVEMPLVFATYRILYEAADPRDIVKELMTRQLKNEN.

3 residues coordinate NADPH: W13, K34, and K108. The sn-glycerol 3-phosphate site is built by K108, G136, and S138. A140 lines the NADPH pocket. K191, D244, S254, R255, and N256 together coordinate sn-glycerol 3-phosphate. Catalysis depends on K191, which acts as the Proton acceptor. Position 255 (R255) interacts with NADPH. Residues V279 and E281 each coordinate NADPH.

It belongs to the NAD-dependent glycerol-3-phosphate dehydrogenase family.

It is found in the cytoplasm. The enzyme catalyses sn-glycerol 3-phosphate + NAD(+) = dihydroxyacetone phosphate + NADH + H(+). The catalysed reaction is sn-glycerol 3-phosphate + NADP(+) = dihydroxyacetone phosphate + NADPH + H(+). The protein operates within membrane lipid metabolism; glycerophospholipid metabolism. In terms of biological role, catalyzes the reduction of the glycolytic intermediate dihydroxyacetone phosphate (DHAP) to sn-glycerol 3-phosphate (G3P), the key precursor for phospholipid synthesis. The polypeptide is Glycerol-3-phosphate dehydrogenase [NAD(P)+] (Francisella tularensis subsp. tularensis (strain FSC 198)).